The following is a 165-amino-acid chain: Large ribosomal subunit protein uL11 (165 aa).

The protein belongs to the universal ribosomal protein uL11 family. As to quaternary structure, part of the ribosomal stalk of the 50S ribosomal subunit. Interacts with L10 and the large rRNA to form the base of the stalk. L10 forms an elongated spine to which L12 dimers bind in a sequential fashion forming a multimeric L10(L12)X complex.

Functionally, forms part of the ribosomal stalk which helps the ribosome interact with GTP-bound translation factors. The polypeptide is Large ribosomal subunit protein uL11 (Thermococcus kodakarensis (strain ATCC BAA-918 / JCM 12380 / KOD1) (Pyrococcus kodakaraensis (strain KOD1))).